Here is a 393-residue protein sequence, read N- to C-terminus: Acetate kinase (393 aa).

N7 contacts Mg(2+). K14 serves as a coordination point for ATP. R90 contacts substrate. D147 acts as the Proton donor/acceptor in catalysis. ATP-binding positions include 205–209, 280–282, and 328–332; these read HLGNG, DFR, and GIGEN. Mg(2+) is bound at residue E380.

It belongs to the acetokinase family. In terms of assembly, homodimer. Mg(2+) is required as a cofactor. Requires Mn(2+) as cofactor.

The protein localises to the cytoplasm. The enzyme catalyses acetate + ATP = acetyl phosphate + ADP. Its pathway is metabolic intermediate biosynthesis; acetyl-CoA biosynthesis; acetyl-CoA from acetate: step 1/2. Catalyzes the formation of acetyl phosphate from acetate and ATP. Can also catalyze the reverse reaction. This chain is Acetate kinase, found in Finegoldia magna (strain ATCC 29328 / DSM 20472 / WAL 2508) (Peptostreptococcus magnus).